A 506-amino-acid polypeptide reads, in one-letter code: Chromosomal replication initiator protein DnaA (506 aa).

The domain I, interacts with DnaA modulators stretch occupies residues 1–77; it reads MECATTATTP…IWAEESGAKR (77 aa). The segment at 77–162 is domain II; the sequence is RRVDLAVRNA…AVAGDVASGS (86 aa). Basic and acidic residues-rich tracts occupy residues 103-112 and 121-142; these read TERTDMHSGD and SDGR…RAVE. The segment at 103–142 is disordered; sequence TERTDMHSGDTRQQSARISDGRSTDARGADGRGSDARAVE. The segment at 163 to 384 is domain III, AAA+ region; it reads PLDARLTFET…GALNKLLAFN (222 aa). 4 residues coordinate ATP: Gly-210, Gly-212, Lys-213, and Thr-214. The interval 385-506 is domain IV, binds dsDNA; the sequence is QLTGEPVTLE…EVLKRLALEA (122 aa).

This sequence belongs to the DnaA family. Oligomerizes as a right-handed, spiral filament on DNA at oriC.

It localises to the cytoplasm. Plays an essential role in the initiation and regulation of chromosomal replication. ATP-DnaA binds to the origin of replication (oriC) to initiate formation of the DNA replication initiation complex once per cell cycle. Binds the DnaA box (a 9 base pair repeat at the origin) and separates the double-stranded (ds)DNA. Forms a right-handed helical filament on oriC DNA; dsDNA binds to the exterior of the filament while single-stranded (ss)DNA is stabiized in the filament's interior. The ATP-DnaA-oriC complex binds and stabilizes one strand of the AT-rich DNA unwinding element (DUE), permitting loading of DNA polymerase. After initiation quickly degrades to an ADP-DnaA complex that is not apt for DNA replication. Binds acidic phospholipids. The polypeptide is Chromosomal replication initiator protein DnaA (Xanthobacter autotrophicus (strain ATCC BAA-1158 / Py2)).